A 263-amino-acid chain; its full sequence is Chymotrypsinogen B2 (263 aa).

A signal peptide spans 1-18 (MAFLWLLSCWALLGTTFG). Disulfide bonds link Cys-19–Cys-140, Cys-60–Cys-76, Cys-154–Cys-219, Cys-186–Cys-200, and Cys-209–Cys-238. The Peptidase S1 domain occupies 34 to 261 (IVNGEDAVPG…LIPWVQKILA (228 aa)). Residues His-75 and Asp-120 each act as charge relay system in the active site. Ser-213 acts as the Charge relay system in catalysis.

Belongs to the peptidase S1 family.

The protein resides in the secreted. Its subcellular location is the extracellular space. It carries out the reaction Preferential cleavage: Tyr-|-Xaa, Trp-|-Xaa, Phe-|-Xaa, Leu-|-Xaa.. The chain is Chymotrypsinogen B2 (CTRB2) from Homo sapiens (Human).